A 227-amino-acid chain; its full sequence is Cytochrome c oxidase subunit 2 (227 aa).

Residues 1–14 (MAYPFQLGLQDATS) lie on the Mitochondrial intermembrane side of the membrane. The helical transmembrane segment at 15–45 (PIMEELLHFHDHTLMIVFLISSLVLYIISLM) threads the bilayer. The Mitochondrial matrix segment spans residues 46–59 (LTTKLTHTSTMDAQ). Residues 60-87 (EVETVWTILPAIILILIALPSLRILYMM) form a helical membrane-spanning segment. The Mitochondrial intermembrane portion of the chain corresponds to 88-227 (DEINNPSLTV…YFETWSALMV (140 aa)). Residues His-161, Cys-196, Glu-198, Cys-200, His-204, and Met-207 each coordinate Cu cation. Mg(2+) is bound at residue Glu-198. The residue at position 218 (Tyr-218) is a Phosphotyrosine.

Belongs to the cytochrome c oxidase subunit 2 family. In terms of assembly, component of the cytochrome c oxidase (complex IV, CIV), a multisubunit enzyme composed of 14 subunits. The complex is composed of a catalytic core of 3 subunits MT-CO1, MT-CO2 and MT-CO3, encoded in the mitochondrial DNA, and 11 supernumerary subunits COX4I, COX5A, COX5B, COX6A, COX6B, COX6C, COX7A, COX7B, COX7C, COX8 and NDUFA4, which are encoded in the nuclear genome. The complex exists as a monomer or a dimer and forms supercomplexes (SCs) in the inner mitochondrial membrane with NADH-ubiquinone oxidoreductase (complex I, CI) and ubiquinol-cytochrome c oxidoreductase (cytochrome b-c1 complex, complex III, CIII), resulting in different assemblies (supercomplex SCI(1)III(2)IV(1) and megacomplex MCI(2)III(2)IV(2)). Found in a complex with TMEM177, COA6, COX18, COX20, SCO1 and SCO2. Interacts with TMEM177 in a COX20-dependent manner. Interacts with COX20. Interacts with COX16. It depends on Cu cation as a cofactor.

The protein resides in the mitochondrion inner membrane. The catalysed reaction is 4 Fe(II)-[cytochrome c] + O2 + 8 H(+)(in) = 4 Fe(III)-[cytochrome c] + 2 H2O + 4 H(+)(out). In terms of biological role, component of the cytochrome c oxidase, the last enzyme in the mitochondrial electron transport chain which drives oxidative phosphorylation. The respiratory chain contains 3 multisubunit complexes succinate dehydrogenase (complex II, CII), ubiquinol-cytochrome c oxidoreductase (cytochrome b-c1 complex, complex III, CIII) and cytochrome c oxidase (complex IV, CIV), that cooperate to transfer electrons derived from NADH and succinate to molecular oxygen, creating an electrochemical gradient over the inner membrane that drives transmembrane transport and the ATP synthase. Cytochrome c oxidase is the component of the respiratory chain that catalyzes the reduction of oxygen to water. Electrons originating from reduced cytochrome c in the intermembrane space (IMS) are transferred via the dinuclear copper A center (CU(A)) of subunit 2 and heme A of subunit 1 to the active site in subunit 1, a binuclear center (BNC) formed by heme A3 and copper B (CU(B)). The BNC reduces molecular oxygen to 2 water molecules using 4 electrons from cytochrome c in the IMS and 4 protons from the mitochondrial matrix. The protein is Cytochrome c oxidase subunit 2 (MT-CO2) of Canis lupus familiaris (Dog).